The following is a 177-amino-acid chain: Adenine phosphoribosyltransferase (177 aa).

This sequence belongs to the purine/pyrimidine phosphoribosyltransferase family. Homodimer.

It is found in the cytoplasm. It catalyses the reaction AMP + diphosphate = 5-phospho-alpha-D-ribose 1-diphosphate + adenine. It participates in purine metabolism; AMP biosynthesis via salvage pathway; AMP from adenine: step 1/1. Its function is as follows. Catalyzes a salvage reaction resulting in the formation of AMP, that is energically less costly than de novo synthesis. The protein is Adenine phosphoribosyltransferase of Leuconostoc citreum (strain KM20).